The sequence spans 1229 residues: uncharacterized protein (1229 aa).

The first 19 residues, 1-19 (MKYFLLLFLLVLSFTLVES), serve as a signal peptide directing secretion. Asparagine 238, asparagine 270, asparagine 370, asparagine 538, asparagine 691, and asparagine 701 each carry an N-linked (GlcNAc...) asparagine glycan. The 136-residue stretch at 678-813 (RMVNFANVME…QWNIDTVKMN (136 aa)) folds into the Galectin 1 domain. Over residues 818 to 829 (HTTTVEPSTPLE) the composition is skewed to polar residues. The tract at residues 818 to 903 (HTTTVEPSTP…TLPPTTTPYN (86 aa)) is disordered. Over residues 830–846 (TASTSQSTPSATLTSTT) the composition is skewed to low complexity. Over residues 847–869 (ENIPSTSKIPETSTTQRPTSPIL) the composition is skewed to polar residues. Over residues 870-901 (TSGATSTSSSTESTTTSPTTSTTTTLPPTTTP) the composition is skewed to low complexity. Asparagine 903, asparagine 938, and asparagine 948 each carry an N-linked (GlcNAc...) asparagine glycan. Positions 925–1059 (RPVVFSRYME…ESTIDTVSMA (135 aa)) constitute a Galectin 2 domain. Positions 1061–1087 (VRPPTTPTTTTSTTTTTTPKLTTTSTL) are disordered. Residues 1067–1087 (PTTTTSTTTTTTPKLTTTSTL) are compositionally biased toward low complexity. A glycan (N-linked (GlcNAc...) asparagine) is linked at asparagine 1146.

This is an uncharacterized protein from Caenorhabditis elegans.